The sequence spans 148 residues: Deoxyuridine 5'-triphosphate nucleotidohydrolase (148 aa).

It belongs to the dUTPase family. Requires Mg(2+) as cofactor.

It carries out the reaction dUTP + H2O = dUMP + diphosphate + H(+). The protein operates within pyrimidine metabolism; dUMP biosynthesis; dUMP from dCTP (dUTP route): step 2/2. This enzyme decreases the intracellular concentration of dUTP so that uracil cannot be incorporated into viral progeny DNA. This activity is sufficient to exclude uracil from the DNA during phage replication. In the case of dUTPase mutant phages, the host dUTPase activity is not sufficient to exclude uracil from T5 DNA and uracil are incorporated, leading to decreased phage viability. The sequence is that of Deoxyuridine 5'-triphosphate nucleotidohydrolase (DUT) from Escherichia coli (Enterobacteria phage T5).